The following is an 889-amino-acid chain: Translation initiation factor IF-2 (889 aa).

Residues L158 to Q296 are disordered. Positions A209–T228 are enriched in low complexity. Positions V238–G270 are enriched in basic and acidic residues. In terms of domain architecture, tr-type G spans P391–K560. A G1 region spans residues G400–T407. G400 to T407 serves as a coordination point for GTP. The segment at G425–H429 is G2. The segment at D446–G449 is G3. Residues D446–H450 and N500–D503 contribute to the GTP site. Residues N500 to D503 form a G4 region. Residues S536–K538 form a G5 region.

This sequence belongs to the TRAFAC class translation factor GTPase superfamily. Classic translation factor GTPase family. IF-2 subfamily.

The protein localises to the cytoplasm. In terms of biological role, one of the essential components for the initiation of protein synthesis. Protects formylmethionyl-tRNA from spontaneous hydrolysis and promotes its binding to the 30S ribosomal subunits. Also involved in the hydrolysis of GTP during the formation of the 70S ribosomal complex. The protein is Translation initiation factor IF-2 of Nitrosomonas europaea (strain ATCC 19718 / CIP 103999 / KCTC 2705 / NBRC 14298).